We begin with the raw amino-acid sequence, 382 residues long: Anthranilate O-methyltransferase 1 (382 aa).

Tyr-20 provides a ligand contact to S-adenosyl-L-homocysteine. Residue Gln-27 coordinates anthranilate. The S-adenosyl-L-homocysteine site is built by Cys-61, Asn-66, Asp-102, Leu-103, Ser-146, and Tyr-147. Trp-168 is a binding site for anthranilate. Mg(2+) contacts are provided by Glu-268 and Phe-270.

The protein belongs to the methyltransferase superfamily. Type-7 methyltransferase family. SABATH subfamily.

It catalyses the reaction anthranilate + S-adenosyl-L-methionine = O-methyl anthranilate + S-adenosyl-L-homocysteine. Its function is as follows. Methyltransferase involved in the biosynthesis of methyl anthranilate in response to stresses. Utilizes anthranilic acid as substrate, but not salicylic acid. Produces exclusively the O-methyl ester. In Zea mays (Maize), this protein is Anthranilate O-methyltransferase 1 (AAMT1).